A 220-amino-acid polypeptide reads, in one-letter code: Miraculin (220 aa).

Positions M1–A29 are cleaved as a signal peptide. A glycan (N-linked (GlcNAc...) asparagine) is linked at N71. 3 disulfides stabilise this stretch: C76–C121, C177–C188, and C181–C184. N-linked (GlcNAc...) asparagine glycosylation is present at N215.

Belongs to the protease inhibitor I3 (leguminous Kunitz-type inhibitor) family. As to quaternary structure, homotetramer; dimer of homodimer. In terms of processing, glycosylated; contains as much as 13,9% of sugars (glucosamine, mannose, galactose, xylose, and fucose). As to expression, expressed in fruit pulp after pollination. Not expressed in seeds, stems or leaves.

Its function is as follows. Miraculin has the property of modifying a sour taste into a sweet taste. This alteration of taste perception persists for many minutes. This chain is Miraculin, found in Synsepalum dulcificum (Miracle fruit).